Reading from the N-terminus, the 265-residue chain is Apolipoprotein A-I (265 aa).

The N-terminal stretch at 1–18 is a signal peptide; that stretch reads MKAVVLAVAALFLAGGEA. 2 repeat units span residues 68–89 and 90–111. The 10 X approximate tandem repeats stretch occupies residues 68–265; it reads LKLTENLDTL…EEASKKLSSQ (198 aa). Residue M110 is modified to Methionine sulfoxide. The stretch at 112-122 is one 3; half-length repeat; sequence KDLADMKQKVQ. 3 tandem repeats follow at residues 123–144, 145–166, and 167–188. The stretch at 189–208 is one 7; truncated repeat; the sequence is PYSEQMRERLAERLAALRDS. M194 carries the post-translational modification Methionine sulfoxide. Repeat 8 spans residues 209 to 230; that stretch reads PSLAEYQAKAHEHLKTLHEKAQ. A 9; half-length repeat occupies 231–241; the sequence is PALSDLGQGVL. Residues 242–265 form repeat 10; that stretch reads PVLESLKATLVGAIEEASKKLSSQ.

The protein belongs to the apolipoprotein A1/A4/E family. In terms of assembly, homodimer. Interacts with APOA1BP and CLU. Component of a sperm activating protein complex (SPAP), consisting of APOA1, an immunoglobulin heavy chain, an immunoglobulin light chain and albumin. Interacts with NDRG1. Interacts with SCGB3A2. Interacts with NAXE and YJEFN3. Post-translationally, glycosylated. In terms of processing, palmitoylated. Phosphorylation sites are present in the extracellular medium.

The protein resides in the secreted. Its function is as follows. Participates in the reverse transport of cholesterol from tissues to the liver for excretion by promoting cholesterol efflux from tissues and by acting as a cofactor for the lecithin cholesterol acyltransferase (LCAT). As part of the SPAP complex, activates spermatozoa motility. This chain is Apolipoprotein A-I (Apoa1), found in Dipodomys ordii (Ord's kangaroo rat).